The following is a 177-amino-acid chain: MTEMVPAWVEGRLMPVEKLEAHQRGLRHMAISVFVMAGEAVLIQRRAAGKYHTPGLWANTCCTHPRWGEEAADCAVRRLREELGITGLVTVFADRVEYRADVGNGLTEHEVVDIFVAEAPSDLPVNPDPEEVWETRWVDLTDLAREVKEHPERFTPWLRIYLAEHMERIFGKLRVVQ.

Mn(2+) contacts are provided by His22 and His28. The region spanning 26–160 is the Nudix hydrolase domain; sequence LRHMAISVFV…PERFTPWLRI (135 aa). Cys62 is an active-site residue. His64 contacts Mn(2+). Residue Glu82 participates in Mg(2+) binding. Residues Glu108 and Glu110 each contribute to the Mn(2+) site. Glu110 is a catalytic residue.

This sequence belongs to the IPP isomerase type 1 family. It depends on Mg(2+) as a cofactor. Mn(2+) is required as a cofactor.

It localises to the cytoplasm. The catalysed reaction is isopentenyl diphosphate = dimethylallyl diphosphate. The protein operates within isoprenoid biosynthesis; dimethylallyl diphosphate biosynthesis; dimethylallyl diphosphate from isopentenyl diphosphate: step 1/1. It functions in the pathway porphyrin-containing compound metabolism; chlorophyll biosynthesis. In terms of biological role, catalyzes the 1,3-allylic rearrangement of the homoallylic substrate isopentenyl (IPP) to its highly electrophilic allylic isomer, dimethylallyl diphosphate (DMAPP). The sequence is that of Isopentenyl-diphosphate Delta-isomerase from Cereibacter sphaeroides (strain ATCC 17029 / ATH 2.4.9) (Rhodobacter sphaeroides).